A 238-amino-acid chain; its full sequence is Oil body-associated protein 1A (238 aa).

It belongs to the OBAP family. As to expression, expressed in seeds, but not in leaves or roots. Highest expression in scutellum. Detected in embryo axis and endosperm.

The protein resides in the lipid droplet. This is Oil body-associated protein 1A from Zea mays (Maize).